A 72-amino-acid polypeptide reads, in one-letter code: Translation initiation factor IF-1 (72 aa).

One can recognise an S1-like domain in the interval 1–72 (MAKEDTLEFP…TKGRINYRFK (72 aa)).

The protein belongs to the IF-1 family. In terms of assembly, component of the 30S ribosomal translation pre-initiation complex which assembles on the 30S ribosome in the order IF-2 and IF-3, IF-1 and N-formylmethionyl-tRNA(fMet); mRNA recruitment can occur at any time during PIC assembly.

Its subcellular location is the cytoplasm. Its function is as follows. One of the essential components for the initiation of protein synthesis. Stabilizes the binding of IF-2 and IF-3 on the 30S subunit to which N-formylmethionyl-tRNA(fMet) subsequently binds. Helps modulate mRNA selection, yielding the 30S pre-initiation complex (PIC). Upon addition of the 50S ribosomal subunit IF-1, IF-2 and IF-3 are released leaving the mature 70S translation initiation complex. This chain is Translation initiation factor IF-1, found in Roseobacter denitrificans (strain ATCC 33942 / OCh 114) (Erythrobacter sp. (strain OCh 114)).